Here is a 474-residue protein sequence, read N- to C-terminus: Pyruvate kinase (474 aa).

A substrate-binding site is contributed by R33. Positions 35, 37, and 67 each coordinate K(+). ATP is bound at residue N35–H38. R74 and K155 together coordinate ATP. Mg(2+) is bound at residue E220. G243, D244, and T276 together coordinate substrate. D244 lines the Mg(2+) pocket.

It belongs to the pyruvate kinase family. As to quaternary structure, homotetramer. It depends on Mg(2+) as a cofactor. Requires K(+) as cofactor.

It carries out the reaction pyruvate + ATP = phosphoenolpyruvate + ADP + H(+). It functions in the pathway carbohydrate degradation; glycolysis; pyruvate from D-glyceraldehyde 3-phosphate: step 5/5. The polypeptide is Pyruvate kinase (pyk) (Corynebacterium efficiens (strain DSM 44549 / YS-314 / AJ 12310 / JCM 11189 / NBRC 100395)).